Consider the following 1441-residue polypeptide: MGARASVLSGGELDRWENIRLRPGGKKKYKLKHVVWASRELERFAVNPGLLETSEGCRQILGQLQPSLQTGSEELKSLYNTVATLYCVHQKIEIKDTKEALEKIEEEQNKSKKKAQQAAADTGNRGNSSQVSQNYPIVQNIEGQMVHQAISPRTLNAWVKVVEEKAFSPEVIPMFSALSEGATPQDLNTMLNTVGGHQAAMQMLKETINEEAAEWDRLHPVHAGPITPGQMREPRGSDIAGTTSTLQEQIGWMTNNPPIPVGEIYKRWIILGLNKIVRMYSPSSILDIRQGPKEPFRDYVDRFYKTLRAEQASQEVKNRTTETLLVQNANPDCKTILKALGPAATLEEMMTACQGVGGPGHKARVLAEAMSQVTNSATIMMQRGNFRNQRKIIKCFNCGKEGHIAKNCRAPRKRGCWKCGKEGHQMKDCTERQANFLREDLAFLQGKAEFSSEQNRANSPTRRELQVWGRDNNSLSEAGEEAGDDRQGPVSFSFPQITLWQRPIVTIKIGGQLKEALLDTGADDTVLGEMNLPRRWKPKMIGGIGGFIKVRQYDQITIGICGHKAIGTVLVGPTPVNIIGRNLLTQLGCTLNFPISPIETVPVKLKPGMDGPKVKQWPLTEEKIKALIEICTEMEKEGKISKIGPENPYNTPVFAIKKKDSTKWRKLVDFRELNKKTQDFWEVQLGIPHPAGLKKKKSVTVLDVGDAYFSVPLDKDFRKYTAFTIPSINNETPGIRYQYNVLPQGWKGSPAIFQSSMTKILEPFRKQNPDIVIYQYMDDLYVGSDLEIGQHRAKIEELRRHLLRWGFTTPDKKHQKEPPFLWMGYELHPDKWTVQPIVLPEKDSWTVNDIQKLVGKLNWASQIYAGIKVKQLCKLLRGTKALTEVIPLTEEAELELAENREILKEPVHGVYYDPSKDLIAEVQKQGQGQWTYQIYQEPFKNLKTGKYARMRGAHTNDVKQLTEAVQKIATESIVIWGKTPKFRLPIQKETWETWWTEYTXATWIPEWEVVNTPPLVKLWYQLEKEPIVGAETFYVDGAANRETKKGKAGYVTNRGRQKVVSLTDTTNQKTELQAIHLALQDSGLEVNIVTDSQYALGIIQAQPDKSESELVSQIIEQLIKKEKVYLAWVPAHKGIGGNEQVDKLVSAGIRKVLFLDGIDKAQEDHEKYHSNWRAMASDFNLPPIVAKEIVASCDKCQLKGEAMHGQVDCSPGIWQLDCTHLEGKVILVAVHVASGYIEAEVIPAETGQETAYFLLKLAGRWPVKTIHTDNGPNFTSTTVKAACWWTGIKQEFGIPYNPQSQGVIESMNKELKKIIGQVRDQAEHLKRAVQMAVFIHNFKRKGGIGGYSAGERIVGIIATDIQTKELQKQITKIQNFRVYYRDSRDPLWKGPAKLLWKGEGAVVIQDNNDIKVVPRRKAKVIRDYGKQTAGDDCVASRQDED.

G2 carries the N-myristoyl glycine; by host lipid modification. Positions 7–31 (VLSGGELDRWENIRLRPGGKKKYKL) are interaction with Gp41. Positions 8 to 43 (LSGGELDRWENIRLRPGGKKKYKLKHVVWASRELER) are interaction with host CALM1. The interval 12-19 (ELDRWENI) is interaction with host AP3D1. Residues 14–33 (DRWENIRLRPGGKKKYKLKH) are interaction with membrane phosphatidylinositol 4,5-bisphosphate and RNA. A Nuclear export signal motif is present at residues 16–22 (WENIRLR). Residues 26-32 (KKKYKLK) carry the Nuclear localization signal motif. The interval 73 to 77 (EELKS) is interaction with membrane phosphatidylinositol 4,5-bisphosphate. A disordered region spans residues 106-131 (EEQNKSKKKAQQAAADTGNRGNSSQV). Y135 is subject to Phosphotyrosine; by host. An interaction with human PPIA/CYPA and NUP153 region spans residues 192–230 (NTVGGHQAAMQMLKETINEEAAEWDRLHPVHAGPITPGQ). The interval 280-366 (YSPSSILDIR…GGPGHKARVL (87 aa)) is dimerization/Multimerization of capsid protein p24. 2 CCHC-type zinc fingers span residues 393–410 (IKCF…NCRA) and 414–431 (RGCW…DCTE). Polar residues predominate over residues 451–460 (SSEQNRANSP). The segment at 451–489 (SSEQNRANSPTRRELQVWGRDNNSLSEAGEEAGDDRQGP) is disordered. The interval 495 to 499 (PQITL) is dimerization of protease. The Peptidase A2 domain maps to 514-583 (KEALLDTGAD…TPVNIIGRNL (70 aa)). The active-site For protease activity; shared with dimeric partner is D519. 2 dimerization of protease regions span residues 543-549 (GIGGFIK) and 582-594 (NLLT…LNFP). Positions 637 to 827 (EGKISKIGPE…PPFLWMGYEL (191 aa)) constitute a Reverse transcriptase domain. 3 residues coordinate Mg(2+): D703, D778, and D779. Positions 820–828 (FLWMGYELH) are RT 'primer grip'. A Tryptophan repeat motif motif is present at residues 991–1007 (WETWWTEYTXATWIPEW). The RNase H type-1 domain occupies 1027–1150 (IVGAETFYVD…VDKLVSAGIR (124 aa)). Mg(2+) contacts are provided by D1036, E1071, D1091, and D1142. The segment at 1156–1197 (DGIDKAQEDHEKYHSNWRAMASDFNLPPIVAKEIVASCDKCQ) adopts an Integrase-type zinc-finger fold. Positions 1165, 1169, 1193, and 1196 each coordinate Zn(2+). Positions 1207 to 1357 (VDCSPGIWQL…SAGERIVGII (151 aa)) constitute an Integrase catalytic domain. Residues D1217, D1269, and E1305 each coordinate Mg(2+). The segment at residues 1376–1423 (FRVYYRDSRDPLWKGPAKLLWKGEGAVVIQDNNDIKVVPRRKAKVIRD) is a DNA-binding region (integrase-type).

In terms of assembly, homotrimer; further assembles as hexamers of trimers. Interacts with gp41 (via C-terminus). Interacts with host CALM1; this interaction induces a conformational change in the Matrix protein, triggering exposure of the myristate group. Interacts with host AP3D1; this interaction allows the polyprotein trafficking to multivesicular bodies during virus assembly. Part of the pre-integration complex (PIC) which is composed of viral genome, matrix protein, Vpr and integrase. Homodimer; the homodimer further multimerizes as homohexamers or homopentamers. Interacts with human PPIA/CYPA; This interaction stabilizes the capsid. Interacts with human NUP153. Interacts with host PDZD8; this interaction stabilizes the capsid. Interacts with monkey TRIM5; this interaction destabilizes the capsid. As to quaternary structure, homodimer, whose active site consists of two apposed aspartic acid residues. In terms of assembly, heterodimer of p66 RT and p51 RT (RT p66/p51). Heterodimerization of RT is essential for DNA polymerase activity. The overall folding of the subdomains is similar in p66 RT and p51 RT but the spatial arrangements of the subdomains are dramatically different. Homotetramer; may further associate as a homohexadecamer. Part of the pre-integration complex (PIC) which is composed of viral genome, matrix protein, Vpr and integrase. Interacts with human SMARCB1/INI1 and human PSIP1/LEDGF isoform 1. Interacts with human KPNA3; this interaction might play a role in nuclear import of the pre-integration complex. Interacts with human NUP153; this interaction might play a role in nuclear import of the pre-integration complex. Mg(2+) is required as a cofactor. In terms of processing, specific enzymatic cleavages by the viral protease yield mature proteins. The protease is released by autocatalytic cleavage. The polyprotein is cleaved during and after budding, this process is termed maturation. Proteolytic cleavage of p66 RT removes the RNase H domain to yield the p51 RT subunit. Nucleocapsid protein p7 might be further cleaved after virus entry. Post-translationally, tyrosine phosphorylated presumably in the virion by a host kinase. Phosphorylation is apparently not a major regulator of membrane association. Phosphorylated possibly by host MAPK1; this phosphorylation is necessary for Pin1-mediated virion uncoating. In terms of processing, methylated by host PRMT6, impairing its function by reducing RNA annealing and the initiation of reverse transcription.

The protein resides in the host cell membrane. It localises to the host endosome. Its subcellular location is the host multivesicular body. It is found in the virion membrane. The protein localises to the host nucleus. The protein resides in the host cytoplasm. It localises to the virion. It catalyses the reaction Specific for a P1 residue that is hydrophobic, and P1' variable, but often Pro.. It carries out the reaction Endohydrolysis of RNA in RNA/DNA hybrids. Three different cleavage modes: 1. sequence-specific internal cleavage of RNA. Human immunodeficiency virus type 1 and Moloney murine leukemia virus enzymes prefer to cleave the RNA strand one nucleotide away from the RNA-DNA junction. 2. RNA 5'-end directed cleavage 13-19 nucleotides from the RNA end. 3. DNA 3'-end directed cleavage 15-20 nucleotides away from the primer terminus.. The enzyme catalyses 3'-end directed exonucleolytic cleavage of viral RNA-DNA hybrid.. The catalysed reaction is DNA(n) + a 2'-deoxyribonucleoside 5'-triphosphate = DNA(n+1) + diphosphate. Protease: The viral protease is inhibited by many synthetic protease inhibitors (PIs), such as amprenavir, atazanavir, indinavir, loprinavir, nelfinavir, ritonavir and saquinavir. Use of protease inhibitors in tritherapy regimens permit more ambitious therapeutic strategies. Reverse transcriptase/ribonuclease H: RT can be inhibited either by nucleoside RT inhibitors (NRTIs) or by non nucleoside RT inhibitors (NNRTIs). NRTIs act as chain terminators, whereas NNRTIs inhibit DNA polymerization by binding a small hydrophobic pocket near the RT active site and inducing an allosteric change in this region. Classical NRTIs are abacavir, adefovir (PMEA), didanosine (ddI), lamivudine (3TC), stavudine (d4T), tenofovir (PMPA), zalcitabine (ddC), and zidovudine (AZT). Classical NNRTIs are atevirdine (BHAP U-87201E), delavirdine, efavirenz (DMP-266), emivirine (I-EBU), and nevirapine (BI-RG-587). The tritherapies used as a basic effective treatment of AIDS associate two NRTIs and one NNRTI. Mediates, with Gag polyprotein, the essential events in virion assembly, including binding the plasma membrane, making the protein-protein interactions necessary to create spherical particles, recruiting the viral Env proteins, and packaging the genomic RNA via direct interactions with the RNA packaging sequence (Psi). Gag-Pol polyprotein may regulate its own translation, by the binding genomic RNA in the 5'-UTR. At low concentration, the polyprotein would promote translation, whereas at high concentration, the polyprotein would encapsidate genomic RNA and then shut off translation. In terms of biological role, targets the polyprotein to the plasma membrane via a multipartite membrane-binding signal, that includes its myristoylated N-terminus. Matrix protein is part of the pre-integration complex. Implicated in the release from host cell mediated by Vpu. Binds to RNA. Its function is as follows. Forms the conical core that encapsulates the genomic RNA-nucleocapsid complex in the virion. Most core are conical, with only 7% tubular. The core is constituted by capsid protein hexamer subunits. The core is disassembled soon after virion entry. Host restriction factors such as TRIM5-alpha or TRIMCyp bind retroviral capsids and cause premature capsid disassembly, leading to blocks in reverse transcription. Capsid restriction by TRIM5 is one of the factors which restricts HIV-1 to the human species. Host PIN1 apparently facilitates the virion uncoating. On the other hand, interactions with PDZD8 or CYPA stabilize the capsid. Functionally, encapsulates and protects viral dimeric unspliced genomic RNA (gRNA). Binds these RNAs through its zinc fingers. Acts as a nucleic acid chaperone which is involved in rearangement of nucleic acid secondary structure during gRNA retrotranscription. Also facilitates template switch leading to recombination. As part of the polyprotein, participates in gRNA dimerization, packaging, tRNA incorporation and virion assembly. Aspartyl protease that mediates proteolytic cleavages of Gag and Gag-Pol polyproteins during or shortly after the release of the virion from the plasma membrane. Cleavages take place as an ordered, step-wise cascade to yield mature proteins. This process is called maturation. Displays maximal activity during the budding process just prior to particle release from the cell. Also cleaves Nef and Vif, probably concomitantly with viral structural proteins on maturation of virus particles. Hydrolyzes host EIF4GI and PABP1 in order to shut off the capped cellular mRNA translation. The resulting inhibition of cellular protein synthesis serves to ensure maximal viral gene expression and to evade host immune response. Also mediates cleavage of host YTHDF3. Mediates cleavage of host CARD8, thereby activating the CARD8 inflammasome, leading to the clearance of latent HIV-1 in patient CD4(+) T-cells after viral reactivation; in contrast, HIV-1 can evade CARD8-sensing when its protease remains inactive in infected cells prior to viral budding. In terms of biological role, multifunctional enzyme that converts the viral RNA genome into dsDNA in the cytoplasm, shortly after virus entry into the cell. This enzyme displays a DNA polymerase activity that can copy either DNA or RNA templates, and a ribonuclease H (RNase H) activity that cleaves the RNA strand of RNA-DNA heteroduplexes in a partially processive 3' to 5' endonucleasic mode. Conversion of viral genomic RNA into dsDNA requires many steps. A tRNA(3)-Lys binds to the primer-binding site (PBS) situated at the 5'-end of the viral RNA. RT uses the 3' end of the tRNA primer to perform a short round of RNA-dependent minus-strand DNA synthesis. The reading proceeds through the U5 region and ends after the repeated (R) region which is present at both ends of viral RNA. The portion of the RNA-DNA heteroduplex is digested by the RNase H, resulting in a ssDNA product attached to the tRNA primer. This ssDNA/tRNA hybridizes with the identical R region situated at the 3' end of viral RNA. This template exchange, known as minus-strand DNA strong stop transfer, can be either intra- or intermolecular. RT uses the 3' end of this newly synthesized short ssDNA to perform the RNA-dependent minus-strand DNA synthesis of the whole template. RNase H digests the RNA template except for two polypurine tracts (PPTs) situated at the 5'-end and near the center of the genome. It is not clear if both polymerase and RNase H activities are simultaneous. RNase H probably can proceed both in a polymerase-dependent (RNA cut into small fragments by the same RT performing DNA synthesis) and a polymerase-independent mode (cleavage of remaining RNA fragments by free RTs). Secondly, RT performs DNA-directed plus-strand DNA synthesis using the PPTs that have not been removed by RNase H as primers. PPTs and tRNA primers are then removed by RNase H. The 3' and 5' ssDNA PBS regions hybridize to form a circular dsDNA intermediate. Strand displacement synthesis by RT to the PBS and PPT ends produces a blunt ended, linear dsDNA copy of the viral genome that includes long terminal repeats (LTRs) at both ends. Its function is as follows. Catalyzes viral DNA integration into the host chromosome, by performing a series of DNA cutting and joining reactions. This enzyme activity takes place after virion entry into a cell and reverse transcription of the RNA genome in dsDNA. The first step in the integration process is 3' processing. This step requires a complex comprising the viral genome, matrix protein, Vpr and integrase. This complex is called the pre-integration complex (PIC). The integrase protein removes 2 nucleotides from each 3' end of the viral DNA, leaving recessed CA OH's at the 3' ends. In the second step, the PIC enters cell nucleus. This process is mediated through integrase and Vpr proteins, and allows the virus to infect a non dividing cell. This ability to enter the nucleus is specific of lentiviruses, other retroviruses cannot and rely on cell division to access cell chromosomes. In the third step, termed strand transfer, the integrase protein joins the previously processed 3' ends to the 5' ends of strands of target cellular DNA at the site of integration. The 5'-ends are produced by integrase-catalyzed staggered cuts, 5 bp apart. A Y-shaped, gapped, recombination intermediate results, with the 5'-ends of the viral DNA strands and the 3' ends of target DNA strands remaining unjoined, flanking a gap of 5 bp. The last step is viral DNA integration into host chromosome. This involves host DNA repair synthesis in which the 5 bp gaps between the unjoined strands are filled in and then ligated. Since this process occurs at both cuts flanking the HIV genome, a 5 bp duplication of host DNA is produced at the ends of HIV-1 integration. Alternatively, Integrase may catalyze the excision of viral DNA just after strand transfer, this is termed disintegration. This is Gag-Pol polyprotein (gag-pol) from Human immunodeficiency virus type 1 group M subtype B (isolate MN) (HIV-1).